We begin with the raw amino-acid sequence, 616 residues long: Homeodomain-interacting protein kinase 4 (616 aa).

The 337-residue stretch at 11–347 (YDIIEVLGKG…PSAALRHPFV (337 aa)) folds into the Protein kinase domain. ATP-binding positions include 17–25 (LGKGTFGEV) and lysine 40. The Proton acceptor role is filled by aspartate 136. The disordered stretch occupies residues 487–616 (HKARKAPAGS…SFLQHVGGHH (130 aa)). The segment covering 497–512 (KSDSNFSNLIRLSQAS) has biased composition (polar residues). Serine 512 carries the post-translational modification Phosphoserine. Basic and acidic residues predominate over residues 542-560 (REGDGPSIKDRPMDAERSG).

This sequence belongs to the protein kinase superfamily. CMGC Ser/Thr protein kinase family. HIPK subfamily. In terms of processing, autophosphorylated.

Its subcellular location is the cytoplasm. It catalyses the reaction L-seryl-[protein] + ATP = O-phospho-L-seryl-[protein] + ADP + H(+). The catalysed reaction is L-threonyl-[protein] + ATP = O-phospho-L-threonyl-[protein] + ADP + H(+). In terms of biological role, protein kinase that phosphorylates TP53, and thus induces TP53 repression of BIRC5 promoter. May act as a corepressor of transcription factors (Potential). The polypeptide is Homeodomain-interacting protein kinase 4 (Hipk4) (Rattus norvegicus (Rat)).